The following is a 477-amino-acid chain: tRNA-2-methylthio-N(6)-dimethylallyladenosine synthase (477 aa).

The 121-residue stretch at 9–129 (RKLHIKSYGC…LPQLLARAKT (121 aa)) folds into the MTTase N-terminal domain. C18, C54, C92, C170, C174, and C177 together coordinate [4Fe-4S] cluster. The 231-residue stretch at 156 to 386 (RSRGISAFVT…QLQNLIDSQQ (231 aa)) folds into the Radical SAM core domain. In terms of domain architecture, TRAM spans 391 to 453 (RTALGRTIDV…RYSLFGTLAS (63 aa)). The disordered stretch occupies residues 454–477 (KPTSGEPSNHAATGGAQFQTTAGA). Low complexity predominate over residues 464–477 (AATGGAQFQTTAGA).

Belongs to the methylthiotransferase family. MiaB subfamily. In terms of assembly, monomer. [4Fe-4S] cluster serves as cofactor.

It is found in the cytoplasm. It catalyses the reaction N(6)-dimethylallyladenosine(37) in tRNA + (sulfur carrier)-SH + AH2 + 2 S-adenosyl-L-methionine = 2-methylsulfanyl-N(6)-dimethylallyladenosine(37) in tRNA + (sulfur carrier)-H + 5'-deoxyadenosine + L-methionine + A + S-adenosyl-L-homocysteine + 2 H(+). Catalyzes the methylthiolation of N6-(dimethylallyl)adenosine (i(6)A), leading to the formation of 2-methylthio-N6-(dimethylallyl)adenosine (ms(2)i(6)A) at position 37 in tRNAs that read codons beginning with uridine. The polypeptide is tRNA-2-methylthio-N(6)-dimethylallyladenosine synthase (Nitrobacter winogradskyi (strain ATCC 25391 / DSM 10237 / CIP 104748 / NCIMB 11846 / Nb-255)).